The primary structure comprises 394 residues: Actin-related protein 2 (394 aa).

ATP-binding positions include 160-162, 214-218, and 305-310; these read GDG, RMIKE, and GGSTMY.

This sequence belongs to the actin family. ARP2 subfamily. Component of the Arp2/3 complex composed of ACTR2/ARP2, ACTR3/ARP3, ARPC1B/p41-ARC, ARPC2/p34-ARC, ARPC3/p21-ARC, ARPC4/p20-ARC and ARPC5/p16-ARC.

The protein resides in the cytoplasm. The protein localises to the cytoskeleton. It localises to the cell projection. Its subcellular location is the nucleus. ATP-binding component of the Arp2/3 complex, a multiprotein complex that mediates actin polymerization upon stimulation by nucleation-promoting factor (NPF). The Arp2/3 complex mediates the formation of branched actin networks in the cytoplasm, providing the force for cell motility. Seems to contact the pointed end of the daughter actin filament. In addition to its role in the cytoplasmic cytoskeleton, the Arp2/3 complex also promotes actin polymerization in the nucleus, thereby regulating gene transcription and repair of damaged DNA. The Arp2/3 complex promotes homologous recombination (HR) repair in response to DNA damage by promoting nuclear actin polymerization, leading to drive motility of double-strand breaks (DSBs). The protein is Actin-related protein 2 (ACTR2) of Gallus gallus (Chicken).